The chain runs to 544 residues: CTP synthase (544 aa).

The interval 1–266 (MATNYIFVTG…DDFVCDRFRL (266 aa)) is amidoligase domain. S14 contributes to the CTP binding site. Position 14 (S14) interacts with UTP. ATP is bound by residues 15–20 (SLGKGI) and D72. Mg(2+)-binding residues include D72 and E140. CTP-binding positions include 147 to 149 (DIE), 187 to 192 (KTKPTQ), and K223. UTP-binding positions include 187 to 192 (KTKPTQ) and K223. Residue 239 to 241 (KDV) participates in ATP binding. One can recognise a Glutamine amidotransferase type-1 domain in the interval 291-542 (TIGMVGKYVE…VKAAKEHQGK (252 aa)). An L-glutamine-binding site is contributed by G352. C379 serves as the catalytic Nucleophile; for glutamine hydrolysis. Residues 380–383 (LGMQ), E403, and R470 contribute to the L-glutamine site. Active-site residues include H515 and E517.

It belongs to the CTP synthase family. Homotetramer.

It carries out the reaction UTP + L-glutamine + ATP + H2O = CTP + L-glutamate + ADP + phosphate + 2 H(+). The enzyme catalyses L-glutamine + H2O = L-glutamate + NH4(+). The catalysed reaction is UTP + NH4(+) + ATP = CTP + ADP + phosphate + 2 H(+). The protein operates within pyrimidine metabolism; CTP biosynthesis via de novo pathway; CTP from UDP: step 2/2. With respect to regulation, allosterically activated by GTP, when glutamine is the substrate; GTP has no effect on the reaction when ammonia is the substrate. The allosteric effector GTP functions by stabilizing the protein conformation that binds the tetrahedral intermediate(s) formed during glutamine hydrolysis. Inhibited by the product CTP, via allosteric rather than competitive inhibition. Catalyzes the ATP-dependent amination of UTP to CTP with either L-glutamine or ammonia as the source of nitrogen. Regulates intracellular CTP levels through interactions with the four ribonucleotide triphosphates. The polypeptide is CTP synthase (Glaesserella parasuis serovar 5 (strain SH0165) (Haemophilus parasuis)).